The following is a 790-amino-acid chain: MEEKRRKYSISSDNSDTTDSHATSTSASRCSKLPSSTKSGWPRQNEKKPSEVFRTDLITAMKIPDSYQLSPDDYYILADPWRQEWEKGVQVPAGAEAIPEPVVRILPPLEGPPAQASPSSTMLGEGSQPDWPGGSRYDLDEIDAYWLELINSELKEMERPELDELTLERVLEELETLCHQNMARAIETQEGLGIEYDEDVVCDVCRSPEGEDGNEMVFCDKCNVCVHQACYGILKVPTGSWLCRTCALGVQPKCLLCPKRGGALKPTRSGTKWVHVSCALWIPEVSIGCPEKMEPITKISHIPASRWALSCSLCKECTGTCIQCSMPSCVTAFHVTCAFDHGLEMRTILADNDEVKFKSFCQEHSDGGPRNEPTSEPTEPSQAGEDLEKVTLRKQRLQQLEEDFYELVEPAEVAERLDLAEALVDFIYQYWKLKRKANANQPLLTPKTDEVDNLAQQEQDVLYRRLKLFTHLRQDLERVRNLCYMVTRRERTKHAICKLQEQIFHLQMKLIEQDLCRGLSTSFPIDGTFFNSWLAQSVQITAENMAMSEWPLNNGHREDPAPGLLSEELLQDEETLLSFMRDPSLRPGDPARKARGRTRLPAKKKPPPPPPQDGPGSRTTPDKAPKKTWGQDAGSGKGGQGPPTRKPPRRTSSHLPSSPAAGDCPILATPESPPPLAPETPDEAASVAADSDVQVPGPAASPKPLGRLRPPRESKVTRRLPGARPDAGMGPPSAVAERPKVSLHFDTETDGYFSDGEMSDSDVEAEDGGVQRGPREAGAEEVVRMGVLAS.

Disordered stretches follow at residues 1–52 (MEEK…PSEV) and 111–130 (GPPA…SQPD). 2 positions are modified to phosphoserine: Ser-9 and Ser-15. Residues 9-28 (SISSDNSDTTDSHATSTSAS) show a composition bias toward low complexity. An N6-acetyllysine mark is found at Lys-32 and Lys-38. Ser-117 carries the phosphoserine modification. A PHD-type 1 zinc finger spans residues 199 to 249 (DVVCDVCRSPEGEDGNEMVFCDKCNVCVHQACYGILKVPTGSWLCRTCALG). Residues 251–285 (QPKCLLCPKRGGALKPTRSGTKWVHVSCALWIPEV) form a C2HC pre-PHD-type zinc finger. Position 298 is an N6-acetyllysine (Lys-298). The PHD-type 2 zinc-finger motif lies at 309–365 (LSCSLCKECTGTCIQCSMPSCVTAFHVTCAFDHGLEMRTILADNDEVKFKSFCQEHS). Disordered stretches follow at residues 361–386 (CQEH…AGED) and 578–777 (SFMR…PREA). The segment covering 372 to 381 (EPTSEPTEPS) has biased composition (polar residues). The segment covering 593-606 (KARGRTRLPAKKKP) has biased composition (basic residues). Low complexity predominate over residues 684–693 (AASVAADSDV). Residues 737–747 (ERPKVSLHFDT) are compositionally biased toward basic and acidic residues. Acidic residues predominate over residues 757 to 767 (EMSDSDVEAED).

It belongs to the JADE family. Component of the HBO1 complex composed at least of ING4 or ING5, MYST2/HBO1, MEAF6, and one of JADE1, JADE2 and JADE3. Interacts (via C-terminus) with KDM1A (via AOD/Tower domain).

The enzyme catalyses S-ubiquitinyl-[E2 ubiquitin-conjugating enzyme]-L-cysteine + [acceptor protein]-L-lysine = [E2 ubiquitin-conjugating enzyme]-L-cysteine + N(6)-ubiquitinyl-[acceptor protein]-L-lysine.. It functions in the pathway protein modification; protein ubiquitination. In terms of biological role, scaffold subunit of some HBO1 complexes, which have a histone H4 acetyltransferase activity. Acts as an E3 ubiquitin-protein ligase mediating the ubiquitination and subsequent proteasomal degradation of target protein histone demethylase KDM1A. Also acts as a ubiquitin ligase E3 toward itself. Positive regulator of neurogenesis. The protein is E3 ubiquitin-protein ligase Jade-2 (JADE2) of Homo sapiens (Human).